Consider the following 148-residue polypeptide: uncharacterized protein (148 aa).

3 helical membrane passes run 25–45 (FCTV…LLTA), 85–105 (IVRF…LLYL), and 118–138 (LAAT…WVFG).

Belongs to the GtrA family.

It is found in the cell membrane. This is an uncharacterized protein from Bacillus subtilis (strain 168).